The sequence spans 370 residues: Cyclin-A3-4 (370 aa).

Belongs to the cyclin family. Cyclin AB subfamily. In terms of assembly, interacts with FZR2/CCS52A1, FZR1/CCS52A2 and FZR3/CCS52B.

This chain is Cyclin-A3-4 (CYCA3-4), found in Arabidopsis thaliana (Mouse-ear cress).